Reading from the N-terminus, the 186-residue chain is Large ribosomal subunit protein uL5 (186 aa).

This sequence belongs to the universal ribosomal protein uL5 family. Part of the 50S ribosomal subunit; contacts the 5S rRNA and probably tRNA. Forms a bridge to the 30S subunit in the 70S ribosome.

This is one of the proteins that bind and probably mediate the attachment of the 5S RNA into the large ribosomal subunit, where it forms part of the central protuberance. In the 70S ribosome it contacts protein S13 of the 30S subunit (bridge B1b), connecting the 2 subunits; this bridge is implicated in subunit movement. May contact the P site tRNA; the 5S rRNA and some of its associated proteins might help stabilize positioning of ribosome-bound tRNAs. The protein is Large ribosomal subunit protein uL5 of Methanopyrus kandleri (strain AV19 / DSM 6324 / JCM 9639 / NBRC 100938).